We begin with the raw amino-acid sequence, 106 residues long: Immunoglobulin lambda constant 3 (106 aa).

The Ig-like domain occupies 7–101 (PSVTLFPPSS…EGSTVEKTVA (95 aa)). The cysteines at positions 28 and 87 are disulfide-linked.

Immunoglobulins are composed of two identical heavy chains and two identical light chains; disulfide-linked.

It localises to the secreted. The protein resides in the cell membrane. Constant region of immunoglobulin light chains. Immunoglobulins, also known as antibodies, are membrane-bound or secreted glycoproteins produced by B lymphocytes. In the recognition phase of humoral immunity, the membrane-bound immunoglobulins serve as receptors which, upon binding of a specific antigen, trigger the clonal expansion and differentiation of B lymphocytes into immunoglobulins-secreting plasma cells. Secreted immunoglobulins mediate the effector phase of humoral immunity, which results in the elimination of bound antigens. The antigen binding site is formed by the variable domain of one heavy chain, together with that of its associated light chain. Thus, each immunoglobulin has two antigen binding sites with remarkable affinity for a particular antigen. The variable domains are assembled by a process called V-(D)-J rearrangement and can then be subjected to somatic hypermutations which, after exposure to antigen and selection, allow affinity maturation for a particular antigen. In Homo sapiens (Human), this protein is Immunoglobulin lambda constant 3.